The chain runs to 88 residues: Mitochondrial import inner membrane translocase subunit Tim10 (88 aa).

Residues 29 to 54 (CHRKCVPPHYKEAELSKGEAVCLDRC) carry the Twin CX3C motif motif. 2 disulfides stabilise this stretch: cysteine 29–cysteine 54 and cysteine 33–cysteine 50.

Belongs to the small Tim family. In terms of assembly, heterohexamer; composed of 3 copies of TIMM9 and 3 copies of TIMM10/TIM10A, named soluble 70 kDa complex. The complex forms a 6-bladed alpha-propeller structure and associates with the TIMM22 component of the TIM22 complex. Interacts with multi-pass transmembrane proteins in transit.

It is found in the mitochondrion inner membrane. Its function is as follows. Mitochondrial intermembrane chaperone that participates in the import and insertion of multi-pass transmembrane proteins into the mitochondrial inner membrane. May also be required for the transfer of beta-barrel precursors from the TOM complex to the sorting and assembly machinery (SAM complex) of the outer membrane. Acts as a chaperone-like protein that protects the hydrophobic precursors from aggregation and guide them through the mitochondrial intermembrane space. In Danio rerio (Zebrafish), this protein is Mitochondrial import inner membrane translocase subunit Tim10 (timm10).